Consider the following 193-residue polypeptide: Segregation and condensation protein B (193 aa).

This sequence belongs to the ScpB family. In terms of assembly, homodimer. Homodimerization may be required to stabilize the binding of ScpA to the Smc head domains. Component of a cohesin-like complex composed of ScpA, ScpB and the Smc homodimer, in which ScpA and ScpB bind to the head domain of Smc. The presence of the three proteins is required for the association of the complex with DNA.

The protein resides in the cytoplasm. Functionally, participates in chromosomal partition during cell division. May act via the formation of a condensin-like complex containing Smc and ScpA that pull DNA away from mid-cell into both cell halves. The chain is Segregation and condensation protein B from Clostridium botulinum (strain 657 / Type Ba4).